The chain runs to 129 residues: Vacuolar transporter chaperone complex subunit 1 (129 aa).

Position 2 is an N-acetylserine (Ser2). Topologically, residues 2–32 (SSAPLLQRTPGKKIALPTRVEPKVFFANERT) are cytoplasmic. A helical membrane pass occupies residues 33–53 (FLSWLNFTVMLGGLGVGLLNF). The Vacuolar segment spans residues 54-59 (GDKIGR). The chain crosses the membrane as a helical span at residues 60–80 (VSAGLFTFVAMGTMIYALVTY). Topologically, residues 81 to 98 (HWRAAAIRRRGSGPYDDR) are cytoplasmic. A helical membrane pass occupies residues 99–119 (LGPTLLCFFLLVAVIINFILR). Over 120–129 (LKYNDANTKL) the chain is Vacuolar.

Belongs to the VTC1 family. The VTC core complex is an integral membrane heterooligomer composed of the catalytic subunit VTC4 and the accessory subunits VTC1, VTC2 and VTC3. The complex exists in 2 different sub-complexes: VTC1-VTC2-VCT4 and VCT1-VTC3-VTC4. The VCT1-VTC3-VTC4 subcomplex is mostly found on the vacuolar membrane. The VTC1-VTC2-VCT4 subcomplex is observed in the cell periphery, probably ER and nuclear envelope, but localizes to the vacuole under phosphate starvation. Each subunit contains 3 transmembrane helices. VTC1 is a small membrane protein without hydrophilic domain. VTC2, VTC3 and VTC4 are related and have 2 hydrophilic domains that face the cytosol, an N-terminal SPX domain and the central core domain. The central core in VTC4 is the catalytic domain, with the essential catalytic lysine replaced by isoleucine and leucine in VTC2 and VTC3, respectively. The core complex associates with the accessory subunit VTC5. The complex interacts with the v-SNARE NYV1 and with the V(0) subunit of V-ATPase VPH1.

The protein resides in the vacuole membrane. It localises to the cytoplasm. It is found in the cell cortex. The protein localises to the endoplasmic reticulum membrane. Its subcellular location is the cytoplasmic vesicle. The protein resides in the autophagosome membrane. Functionally, accessory subunit of the vacuolar transporter chaperone (VTC) complex. The VTC complex acts as a vacuolar polyphosphate polymerase that catalyzes the synthesis of inorganic polyphosphate (polyP) via transfer of phosphate from ATP to a growing polyP chain, releasing ADP. VTC exposes its catalytic domain VTC4 to the cytosol, where the growing polyP chain winds through a tunnel-shaped pocket, integrating cytoplasmic polymer synthesis with polyP membrane translocation. The VTC complex carries 9 vacuolar transmembrane domains, which are likely to constitute the translocation channel into the organelle lumen. PolyP synthesis is tightly coupled to its transport into the vacuole lumen, in order to avoid otherwise toxic intermediates in the cytosol, and it depends on the proton gradient across the membrane, formed by V-ATPase. VTC1 contributes only 3 transmembrane domains to the complex. The VTC complex also plays a role in vacuolar membrane fusion. Required for SEC18/NSF activity in SNARE priming, membrane binding of LMA1 and V(0) trans-complex formation. This Saccharomyces cerevisiae (strain ATCC 204508 / S288c) (Baker's yeast) protein is Vacuolar transporter chaperone complex subunit 1.